The chain runs to 61 residues: Large ribosomal subunit protein bL28 (61 aa).

The protein belongs to the bacterial ribosomal protein bL28 family.

In Geobacillus kaustophilus (strain HTA426), this protein is Large ribosomal subunit protein bL28.